The primary structure comprises 291 residues: Pyridoxal 5'-phosphate synthase subunit PdxS (291 aa).

Asp-23 contributes to the D-ribose 5-phosphate binding site. The active-site Schiff-base intermediate with D-ribose 5-phosphate is Lys-80. Gly-152 is a D-ribose 5-phosphate binding site. Arg-164 is a binding site for D-glyceraldehyde 3-phosphate. Residues Gly-213 and 234–235 (GS) each bind D-ribose 5-phosphate.

It belongs to the PdxS/SNZ family. As to quaternary structure, in the presence of PdxT, forms a dodecamer of heterodimers.

The catalysed reaction is aldehydo-D-ribose 5-phosphate + D-glyceraldehyde 3-phosphate + L-glutamine = pyridoxal 5'-phosphate + L-glutamate + phosphate + 3 H2O + H(+). The protein operates within cofactor biosynthesis; pyridoxal 5'-phosphate biosynthesis. Catalyzes the formation of pyridoxal 5'-phosphate from ribose 5-phosphate (RBP), glyceraldehyde 3-phosphate (G3P) and ammonia. The ammonia is provided by the PdxT subunit. Can also use ribulose 5-phosphate and dihydroxyacetone phosphate as substrates, resulting from enzyme-catalyzed isomerization of RBP and G3P, respectively. The chain is Pyridoxal 5'-phosphate synthase subunit PdxS from Bifidobacterium longum (strain DJO10A).